The chain runs to 865 residues: Alanine--tRNA ligase (865 aa).

The Zn(2+) site is built by histidine 554, histidine 558, cysteine 656, and histidine 660.

This sequence belongs to the class-II aminoacyl-tRNA synthetase family. Zn(2+) serves as cofactor.

Its subcellular location is the cytoplasm. The enzyme catalyses tRNA(Ala) + L-alanine + ATP = L-alanyl-tRNA(Ala) + AMP + diphosphate. Its function is as follows. Catalyzes the attachment of alanine to tRNA(Ala) in a two-step reaction: alanine is first activated by ATP to form Ala-AMP and then transferred to the acceptor end of tRNA(Ala). Also edits incorrectly charged Ser-tRNA(Ala) and Gly-tRNA(Ala) via its editing domain. The sequence is that of Alanine--tRNA ligase from Francisella philomiragia subsp. philomiragia (strain ATCC 25017 / CCUG 19701 / FSC 153 / O#319-036).